We begin with the raw amino-acid sequence, 949 residues long: ATPase 1, plasma membrane-type (949 aa).

Ser-2 is modified (N-acetylserine). Residues 2–61 (SGLEDIKNETVDLEKIPIEEVFQQLKCTREGLTTQEGEDRIVIFGPNKLEEKKESKILKF) are Cytoplasmic-facing. A helical membrane pass occupies residues 62–81 (LGFMWNPLSWVMEAAALMAI). Over 82 to 93 (ALANGDNRPPDW) the chain is Extracellular. Residues 94 to 114 (QDFVGIICLLVINSTISFIEE) traverse the membrane as a helical segment. Over 115 to 243 (NNAGNAAAAL…GHFQKVLTSI (129 aa)) the chain is Cytoplasmic. The chain crosses the membrane as a helical span at residues 244–264 (GNFCICSIAIGIAIEIVVMYP). Over 265 to 273 (IQHRKYRDG) the chain is Extracellular. The helical transmembrane segment at 274–291 (IDNLLVLLIGGIPIAMPT) threads the bilayer. Residues 292–643 (VLSVTMAIGS…TSRAIFQRMK (352 aa)) are Cytoplasmic-facing. Catalysis depends on Asp-329, which acts as the 4-aspartylphosphate intermediate. 2 residues coordinate Mg(2+): Asp-588 and Asp-592. Residues 644 to 665 (NYTIYAVSITIRIVFGFMLIAL) form a helical membrane-spanning segment. Residues 666–670 (IWEFD) lie on the Extracellular side of the membrane. Residues 671-693 (FSAFMVLIIAILNDGTIMTISKD) form a helical membrane-spanning segment. At 694-709 (RVKPSPTPDSWKLKEI) the chain is on the cytoplasmic side. Residues 710 to 730 (FATGIVLGGYQAIMSVIFFWA) form a helical membrane-spanning segment. Topologically, residues 731–751 (AHKTDFFSDKFGVRSIRDNND) are extracellular. The chain crosses the membrane as a helical span at residues 752-772 (ELMGAVYLQVSIISQALIFVT). The Cytoplasmic segment spans residues 773–784 (RSRSWSFVERPG). The helical transmembrane segment at 785–805 (ALLMIAFVIAQLVATLIAVYA) threads the bilayer. The Extracellular segment spans residues 806–813 (DWTFAKVK). A helical membrane pass occupies residues 814–834 (GIGWGWAGVIWIYSIVTYFPQ). At 835–949 (DILKFAIRYI…IDTAGHHYTV (115 aa)) the chain is on the cytoplasmic side. Thr-881 bears the Phosphothreonine mark. Ser-899 and Ser-931 each carry phosphoserine. The interaction with 14-3-3 proteins stretch occupies residues 947-949 (YTV). At Thr-948 the chain carries Phosphothreonine.

It belongs to the cation transport ATPase (P-type) (TC 3.A.3) family. Type IIIA subfamily. Binds to 14-3-3 proteins. The binding is induced by phosphorylation of Thr-948. Binding to 14-3-3 proteins activates the H(+)-ATPase. Interacts with PPI1; this interaction promotes ATPase activity. Interacts with PSY1R. Part of a functional complex containing PSKR1, BAK1, CNGC17, and AHA. Interacts with CNGC17 and PSKR1. Triggered by SAUR9 via the phosphorylation of the C-terminal autoinhibitory domain. Interacts with AHA2. Binds to CBC1 and CBC2. Phosphorylated, probably by PHOT1 and PHOT2, at C-terminal Thr-948 in guard cells in response to blue light to induce stomatal opening. As to expression, expressed in guard cells, mesophyll cells, leaves and roots.

The protein resides in the cell membrane. The catalysed reaction is ATP + H2O + H(+)(in) = ADP + phosphate + 2 H(+)(out). Phosphorylation on Thr residues is repressed by tyrphostin 9, sphingosine, GW5074 and BML-265. By contrast, the fungal phytotoxin fusicoccin (FC) promotes phosphorylation of Thr-948 independently to BHP, thus leading to large stomatal opening. In terms of biological role, the plasma membrane H(+) ATPase of plants and fungi generates a proton gradient that drives the active transport of nutrients by H(+)-symport. The resulting external acidification and/or internal alkinization may mediate growth responses. Forms a functional cation-translocating unit with CNGC17 that is activated by PSKR1/BAK1 and possibly other BAK1/RLK complexes. Promotes stomatal opening in response to blue light. This Arabidopsis thaliana (Mouse-ear cress) protein is ATPase 1, plasma membrane-type.